A 236-amino-acid chain; its full sequence is Small ribosomal subunit protein uS2c (236 aa).

Belongs to the universal ribosomal protein uS2 family.

The protein resides in the plastid. Its subcellular location is the chloroplast. This Chloranthus spicatus (Chulantree) protein is Small ribosomal subunit protein uS2c (rps2).